We begin with the raw amino-acid sequence, 373 residues long: MKIFIIISLILTILIIQSKSKECPCSNVELCKPLEIGPRKEFIGFSVNSTFYPYYNWDHLTTIGIFYSEDIEDELLCMAKTNGVRLVYSAFYPVEQLSNETYIDQWINEKLELVQNTFTDGLNFDVEYPITDPIVAQQYTQLVAATNNAFKSVNLYYQISVDVAWDASNCIDYRCYDYLGLSKASDFLVVMDYDMKLDGYYFKTCLASANSPPSSVLSGMVNFTKLGIDESSLVMGLPWYGYNYPCIGSNYTLQTFECIIPPSSYLGYNCTDASGIEINYSIIMNMLNDTAIQNGGVQWDSESESPYFNFIDLFSGTQHQMWFDNPDSLTIKVNIARTMNLRGVGVWNIDQLWDDHSLSSGMWGALNSFFKIN.

The first 20 residues, 1-20 (MKIFIIISLILTILIIQSKS), serve as a signal peptide directing secretion. Residues 21-369 (KECPCSNVEL…SGMWGALNSF (349 aa)) form the GH18 domain. An N-linked (GlcNAc...) asparagine glycan is attached at N48. Residues 53 to 54 (PY) and 82 to 85 (NGVR) contribute to the chitin site. N99 carries an N-linked (GlcNAc...) asparagine glycan. E127 functions as the Proton donor in the catalytic mechanism. Chitin-binding positions include Y128 and 191–194 (MDYD). Residues N222, N250, N269, N279, and N288 are each glycosylated (N-linked (GlcNAc...) asparagine). W347 lines the chitin pocket.

It belongs to the glycosyl hydrolase 18 family.

The protein resides in the lysosome. Its function is as follows. Involved in the degradation of asparagine-linked glycoproteins. May hydrolyze of N-acetyl-beta-D-glucosamine (1-4)N-acetylglucosamine chitobiose core from the reducing end of the bond. The protein is Probable di-N-acetylchitobiase 1 (ctbs1) of Dictyostelium discoideum (Social amoeba).